Reading from the N-terminus, the 926-residue chain is G-protein coupled receptor family C group 6 member A (926 aa).

An N-terminal signal peptide occupies residues 1–18 (MAFLIILITCFVIILATS). Residues 19-594 (QPCQTPDDFV…EYLNWNDSLA (576 aa)) are Extracellular-facing. Asn121, Asn259, Asn332, Asn378, Asn452, Asn555, Asn567, and Asn590 each carry an N-linked (GlcNAc...) asparagine glycan. Residues 595–615 (ILLLILSLLGIIFVLVVGIIF) traverse the membrane as a helical segment. The Cytoplasmic segment spans residues 616–631 (TRNLNTPVVKSSGGLR). The chain crosses the membrane as a helical span at residues 632–652 (VCYVILLCHFLNFASTSFFIG). Residues 653–669 (EPQDFTCKTRQTMFGVS) lie on the Extracellular side of the membrane. The chain crosses the membrane as a helical span at residues 670-690 (FTLCISCILTKSLKILLAFSF). Residues 691-704 (DPKLQKFLKCLYRP) lie on the Cytoplasmic side of the membrane. A helical transmembrane segment spans residues 705–725 (ILIIFTCTGIQVVICTLWLIF). Residues 726–748 (AAPTVEVNVSLPRVIILECEEGS) are Extracellular-facing. The N-linked (GlcNAc...) asparagine glycan is linked to Asn733. A helical membrane pass occupies residues 749-769 (ILAFGTMLGYIAILAFICFIF). Residues 770-782 (AFKGKYENYNEAK) lie on the Cytoplasmic side of the membrane. The helical transmembrane segment at 783–803 (FITFGMLIYFIAWITFIPIYA) threads the bilayer. At 804–810 (TTFGKYV) the chain is on the extracellular side. Residues 811 to 831 (PAVEIIVILISNYGILYCTFI) form a helical membrane-spanning segment. At 832-926 (PKCYVIICKQ…TLPRKRMSSI (95 aa)) the chain is on the cytoplasmic side.

This sequence belongs to the G-protein coupled receptor 3 family. Homodimer; disulfide-linked. Isoform 1 is expressed at high level in brain, skeletal muscle, testis, bone, calvaria, osteoblasts and leukocytes. Expressed at intermediate level in liver, heart, kidney and spleen. Expressed at low level in lung, pancreas, placenta and ovary. Not detected in thymus, prostate, small intestine, tongue and colon. Isoform 1 and isoform 2 are expressed in kidney at the same level. Isoform 2 is expressed at lower level than isoform 1 in the other tissues.

It localises to the cell membrane. In terms of biological role, receptor activated by multiple ligands, including osteocalcin (BGLAP), basic amino acids, and various cations. Activated by amino acids with a preference for basic amino acids such as L-Lys, L-Arg and L-ornithine but also by small and polar amino acids. The L-alpha amino acids respond is augmented by divalent cations Ca(2+) and Mg(2+). Seems to act through a G(q)/G(11) and G(i)-coupled pathway. Regulates testosterone production by acting as a ligand for uncarboxylated osteocalcin hormone: osteocalcin-binding at the surface of Leydig cells initiates a signaling response that promotes the expression of enzymes required for testosterone synthesis in a CREB-dependent manner. Mediates the non-genomic effects of androgens in multiple tissue. May coordinate nutritional and hormonal anabolic signals through the sensing of extracellular amino acids, osteocalcin, divalent ions and its responsiveness to anabolic steroids. The chain is G-protein coupled receptor family C group 6 member A (GPRC6A) from Homo sapiens (Human).